The sequence spans 335 residues: Phosphate acyltransferase (335 aa).

It belongs to the PlsX family. In terms of assembly, homodimer. Probably interacts with PlsY.

The protein resides in the cytoplasm. The catalysed reaction is a fatty acyl-[ACP] + phosphate = an acyl phosphate + holo-[ACP]. It participates in lipid metabolism; phospholipid metabolism. Catalyzes the reversible formation of acyl-phosphate (acyl-PO(4)) from acyl-[acyl-carrier-protein] (acyl-ACP). This enzyme utilizes acyl-ACP as fatty acyl donor, but not acyl-CoA. This chain is Phosphate acyltransferase, found in Streptococcus suis (strain 98HAH33).